We begin with the raw amino-acid sequence, 235 residues long: Large ribosomal subunit protein uL1 (235 aa).

It belongs to the universal ribosomal protein uL1 family. As to quaternary structure, part of the 50S ribosomal subunit.

Its function is as follows. Binds directly to 23S rRNA. The L1 stalk is quite mobile in the ribosome, and is involved in E site tRNA release. Functionally, protein L1 is also a translational repressor protein, it controls the translation of the L11 operon by binding to its mRNA. This is Large ribosomal subunit protein uL1 from Prochlorococcus marinus (strain MIT 9215).